We begin with the raw amino-acid sequence, 779 residues long: Endonuclease MutS2 (779 aa).

G328–T335 provides a ligand contact to ATP. The region spanning L704 to G779 is the Smr domain.

The protein belongs to the DNA mismatch repair MutS family. MutS2 subfamily. As to quaternary structure, homodimer. Binds to stalled ribosomes, contacting rRNA.

Its function is as follows. Endonuclease that is involved in the suppression of homologous recombination and thus may have a key role in the control of bacterial genetic diversity. In terms of biological role, acts as a ribosome collision sensor, splitting the ribosome into its 2 subunits. Detects stalled/collided 70S ribosomes which it binds and splits by an ATP-hydrolysis driven conformational change. Acts upstream of the ribosome quality control system (RQC), a ribosome-associated complex that mediates the extraction of incompletely synthesized nascent chains from stalled ribosomes and their subsequent degradation. Probably generates substrates for RQC. The sequence is that of Endonuclease MutS2 from Streptococcus pyogenes serotype M18 (strain MGAS8232).